Consider the following 365-residue polypeptide: Chorismate synthase (365 aa).

Positions 48 and 54 each coordinate NADP(+). Residues 125–127 (RSS), 238–239 (NA), Gly278, 293–297 (KPTSS), and Arg319 contribute to the FMN site.

It belongs to the chorismate synthase family. In terms of assembly, homotetramer. The cofactor is FMNH2.

It catalyses the reaction 5-O-(1-carboxyvinyl)-3-phosphoshikimate = chorismate + phosphate. It participates in metabolic intermediate biosynthesis; chorismate biosynthesis; chorismate from D-erythrose 4-phosphate and phosphoenolpyruvate: step 7/7. In terms of biological role, catalyzes the anti-1,4-elimination of the C-3 phosphate and the C-6 proR hydrogen from 5-enolpyruvylshikimate-3-phosphate (EPSP) to yield chorismate, which is the branch point compound that serves as the starting substrate for the three terminal pathways of aromatic amino acid biosynthesis. This reaction introduces a second double bond into the aromatic ring system. This is Chorismate synthase from Alteromonas mediterranea (strain DSM 17117 / CIP 110805 / LMG 28347 / Deep ecotype).